A 314-amino-acid polypeptide reads, in one-letter code: Mitochondrial 2-oxoglutarate/malate carrier protein (314 aa).

At alanine 2 the chain carries N-acetylalanine. A Phosphoserine modification is found at serine 6. Solcar repeat units lie at residues 23-108, 117-208, and 217-306; these read VKFL…LFER, PGFL…SKQF, and DNIL…MNKA. A helical membrane pass occupies residues 24–42; the sequence is KFLFGGLAGMGATVFVQPL. The residue at position 57 (lysine 57) is an N6-succinyllysine. The helical transmembrane segment at 83–101 threads the bilayer; the sequence is GLSAGLLRQATYTTTRLGI. At tyrosine 102 the chain carries Phosphotyrosine. The next 3 helical transmembrane spans lie at 119–140, 183–202, and 222–240; these read FLLK…GTPA, GCIP…LASY, and HFCA…SMPV. Lysine 256 is subject to N6-acetyllysine. The chain crosses the membrane as a helical span at residues 281-300; sequence GFTPYYARLGPHTVLTFIFL.

This sequence belongs to the mitochondrial carrier (TC 2.A.29) family. In terms of assembly, interacts with SMIM26. The N-terminus is blocked. Heart, liver and brain.

It is found in the mitochondrion inner membrane. The enzyme catalyses (S)-malate(in) + 2-oxoglutarate(out) = (S)-malate(out) + 2-oxoglutarate(in). The catalysed reaction is malonate(in) + 2-oxoglutarate(out) = malonate(out) + 2-oxoglutarate(in). It carries out the reaction succinate(in) + 2-oxoglutarate(out) = succinate(out) + 2-oxoglutarate(in). It catalyses the reaction maleate(in) + 2-oxoglutarate(out) = maleate(out) + 2-oxoglutarate(in). The enzyme catalyses oxaloacetate(in) + 2-oxoglutarate(out) = oxaloacetate(out) + 2-oxoglutarate(in). Functionally, catalyzes the transport of 2-oxoglutarate (alpha-oxoglutarate) across the inner mitochondrial membrane in an electroneutral exchange for malate. Can also exchange 2-oxoglutarate for other dicarboxylic acids such as malonate, succinate, maleate and oxaloacetate, although with lower affinity. Contributes to several metabolic processes, including the malate-aspartate shuttle, the oxoglutarate/isocitrate shuttle, in gluconeogenesis from lactate, and in nitrogen metabolism. Maintains mitochondrial fusion and fission events, and the organization and morphology of cristae. Involved in the regulation of apoptosis. Helps protect from cytotoxic-induced apoptosis by modulating glutathione levels in mitochondria. The chain is Mitochondrial 2-oxoglutarate/malate carrier protein (SLC25A11) from Bos taurus (Bovine).